Here is a 569-residue protein sequence, read N- to C-terminus: Urease subunit alpha (569 aa).

The region spanning 131–569 (GGVDAHIHFI…VAMAQRYFLF (439 aa)) is the Urease domain. Ni(2+) contacts are provided by H136, H138, and K219. Residue K219 is modified to N6-carboxylysine. H221 serves as a coordination point for substrate. 2 residues coordinate Ni(2+): H248 and H274. The Proton donor role is filled by H322. A Ni(2+)-binding site is contributed by D362.

Belongs to the metallo-dependent hydrolases superfamily. Urease alpha subunit family. In terms of assembly, heterotrimer of UreA (gamma), UreB (beta) and UreC (alpha) subunits. Three heterotrimers associate to form the active enzyme. Ni cation serves as cofactor. Post-translationally, carboxylation allows a single lysine to coordinate two nickel ions.

The protein resides in the cytoplasm. The catalysed reaction is urea + 2 H2O + H(+) = hydrogencarbonate + 2 NH4(+). The protein operates within nitrogen metabolism; urea degradation; CO(2) and NH(3) from urea (urease route): step 1/1. The polypeptide is Urease subunit alpha (Geobacillus kaustophilus (strain HTA426)).